Here is a 262-residue protein sequence, read N- to C-terminus: 7alpha-hydroxysteroid dehydrogenase (262 aa).

Residues 13 to 18 (SSTRGI), arginine 38, 63 to 64 (NA), and asparagine 90 each bind NADP(+). Residues threonine 145 and tyrosine 158 each contribute to the taurochenodeoxycholate site. NADP(+) contacts are provided by residues tyrosine 158, lysine 162, and 191-195 (IGTRA). The active-site Proton acceptor is tyrosine 158.

This sequence belongs to the short-chain dehydrogenases/reductases (SDR) family. As to quaternary structure, homotetramer. A dynamic equilibrium between dimers and tetramers seems to exist.

The catalysed reaction is cholate + NADP(+) = 3alpha,12alpha-dihydroxy-7-oxo-5beta-cholanate + NADPH + H(+). It carries out the reaction chenodeoxycholate + NADP(+) = 7-oxolithocholate + NADPH + H(+). The enzyme catalyses 3alpha,7alpha-dihydroxy-12-oxo-5beta-cholanate + NADP(+) = 7,12-dioxo-lithocholate + NADPH + H(+). It catalyses the reaction 7alpha-hydroxy-3,12-dioxo-5beta-cholanate + NADP(+) = dehydrocholate + NADPH + H(+). The catalysed reaction is glycochenodeoxycholate + NADP(+) = 7-oxoglycolithocholate + NADPH + H(+). It carries out the reaction taurochenodeoxycholate + NADP(+) = 7-oxotaurolithocholate + NADPH + H(+). With respect to regulation, activated by metal ions such as Mg(2+), Na(+) and K(+). 7alpha-hydroxysteroid dehydrogenase that catalyzes the NADP(+)-dependent oxidation of the 7alpha-hydroxy group of 7alpha-hydroxysteroids, such as cholate, chenodeoxycholate, glycochenodeoxycholate and taurochenodeoxycholate, to the corresponding 7-oxosteroids. Is also able to catalyze the reverse reduction reactions. Together with 7beta-HSDH encoded in the adjacent gene, is likely involved in the epimerization of the hydroxy group at C-7 of primary bile acids through 7-keto bile acid intermediates. The polypeptide is 7alpha-hydroxysteroid dehydrogenase (Clostridium sardiniense (Clostridium absonum)).